Consider the following 211-residue polypeptide: Protein-methionine-sulfoxide reductase heme-binding subunit MsrQ (211 aa).

The next 5 helical transmembrane spans lie at 17 to 37, 82 to 102, 116 to 136, 153 to 173, and 178 to 198; these read LAGL…GLGA, LWCF…ELGV, PYLT…FTST, FVYL…KIIS, and IYAG…LSLF.

It belongs to the MsrQ family. As to quaternary structure, heterodimer of a catalytic subunit (MsrP) and a heme-binding subunit (MsrQ). Requires FMN as cofactor. Heme b serves as cofactor.

The protein localises to the cell inner membrane. Its function is as follows. Part of the MsrPQ system that repairs oxidized periplasmic proteins containing methionine sulfoxide residues (Met-O), using respiratory chain electrons. Thus protects these proteins from oxidative-stress damage caused by reactive species of oxygen and chlorine generated by the host defense mechanisms. MsrPQ is essential for the maintenance of envelope integrity under bleach stress, rescuing a wide series of structurally unrelated periplasmic proteins from methionine oxidation, including the primary periplasmic chaperone SurA and the lipoprotein Pal. MsrQ provides electrons for reduction to the reductase catalytic subunit MsrP, using the quinone pool of the respiratory chain. The sequence is that of Protein-methionine-sulfoxide reductase heme-binding subunit MsrQ from Shigella boydii serotype 4 (strain Sb227).